The primary structure comprises 622 residues: Pesticidal crystal protein Cry2Ac (622 aa).

Belongs to the delta endotoxin family.

In terms of biological role, promotes colloidosmotic lysis by binding to the midgut epithelial cells of lepidopteran larvae. Has low activity on dipteran larvae. This is Pesticidal crystal protein Cry2Ac (cry2Ac) from Bacillus thuringiensis.